We begin with the raw amino-acid sequence, 205 residues long: uncharacterized protein (205 aa).

A run of 3 helical transmembrane segments spans residues 45 to 65 (LFFY…FLVI), 119 to 139 (VFWL…VTAF), and 144 to 164 (FEWM…LWGY).

The protein belongs to the TVP23 family.

It localises to the membrane. This is an uncharacterized protein from Caenorhabditis elegans.